Here is a 197-residue protein sequence, read N- to C-terminus: RNA-binding protein Rsf1 (197 aa).

The 74-residue stretch at 7-80 (TRVYVGNLTD…SQLRVEISKG (74 aa)) folds into the RRM domain. Positions 74-197 (RVEISKGRPR…SRSPVGNHRF (124 aa)) are disordered. The span at 89 to 102 (GPMDRGGRRGDFGR) shows a compositional bias: basic and acidic residues. Position 106 is a phosphothreonine (Thr106). Composition is skewed to low complexity over residues 117-144 (QRGS…SYNG) and 166-176 (RYSSGSSASYG). A phosphoserine mark is found at Ser168, Ser171, Ser174, Ser188, and Ser190.

Belongs to the splicing factor SR family. In terms of processing, extensively phosphorylated on serine residues in the RS domain.

It is found in the nucleus. Its function is as follows. May control important aspects of development. This Drosophila melanogaster (Fruit fly) protein is RNA-binding protein Rsf1 (Rsf1).